Reading from the N-terminus, the 61-residue chain is UPF0434 protein PFLU_3771 (61 aa).

It belongs to the UPF0434 family.

The chain is UPF0434 protein PFLU_3771 from Pseudomonas fluorescens (strain SBW25).